The sequence spans 150 residues: uncharacterized protein (150 aa).

A Rhodanese domain is found at 19–93 (GAQDYVLVDV…SSKRLALRES (75 aa)).

This is an uncharacterized protein from Synechococcus elongatus.